A 434-amino-acid polypeptide reads, in one-letter code: Gamma-glutamyl phosphate reductase (434 aa).

This sequence belongs to the gamma-glutamyl phosphate reductase family.

Its subcellular location is the cytoplasm. It carries out the reaction L-glutamate 5-semialdehyde + phosphate + NADP(+) = L-glutamyl 5-phosphate + NADPH + H(+). It participates in amino-acid biosynthesis; L-proline biosynthesis; L-glutamate 5-semialdehyde from L-glutamate: step 2/2. Functionally, catalyzes the NADPH-dependent reduction of L-glutamate 5-phosphate into L-glutamate 5-semialdehyde and phosphate. The product spontaneously undergoes cyclization to form 1-pyrroline-5-carboxylate. The sequence is that of Gamma-glutamyl phosphate reductase from Rhodopirellula baltica (strain DSM 10527 / NCIMB 13988 / SH1).